We begin with the raw amino-acid sequence, 225 residues long: Transcriptional activator protein BglJ (225 aa).

One can recognise an HTH luxR-type domain in the interval Tyr-146 to Leu-211. The segment at residues Met-170–Phe-189 is a DNA-binding region (H-T-H motif).

In terms of assembly, forms a complex with RcsB; genetically both BglJ and RcsB are required to relieve bgl operon repression by H-NS and by StpA.

In terms of biological role, a crytic transcriptional activator. When its expression is induced it relieves H-NS repression of the bgl operon. Acts independently of transcription factor LeuO. The protein is Transcriptional activator protein BglJ (bglJ) of Escherichia coli (strain K12).